Reading from the N-terminus, the 114-residue chain is Type 4 adapter protein IcmS (114 aa).

As to quaternary structure, the T4BSS is a complex nanomachine composed of several subcomplexes. This subunit is part of the Type IV Coupling Complex (T4CC), a subcomplex composed of the DotLMNYZ core and the IcmSW-LvgA adapter subunits, linked by the C-terminal tail of DotL. Interacts with IcmW. IcmS and IcmW form a stable complex. Interacts directly with the type 4 coupling protein DotL. Interacts with LvgA. Interacts with effector proteins.

The protein resides in the cytoplasm. Interaction with DotL is critical for the export of IcmSW-dependent substrates. In terms of biological role, component of the Dot/Icm type IVB secretion system (T4BSS), which is used to inject bacterial effector proteins into eukaryotic host cells. Part of a subcomplex which recruits effector proteins and delivers them to the core transmembrane subcomplex. The IcmS/IcmW protein complex plays an important role in protein translocation by interacting with multiple Dot/Icm effector proteins to facilitate their translocation into host cells. Interaction promotes conformational changes in the effector protein, which may facilitate display of a C-terminal translocation signal. May maintain the substrates in a translocation competent form. Required for intracellular growth in host cells, replicative phagosome formation and phagosome trafficking. IcmS is required for IcmW stability. In Legionella pneumophila subsp. pneumophila (strain Philadelphia 1 / ATCC 33152 / DSM 7513), this protein is Type 4 adapter protein IcmS.